The following is a 503-amino-acid chain: Cytosol aminopeptidase (503 aa).

Residues K269 and D274 each coordinate Mn(2+). K281 is an active-site residue. Residues D292, D351, and E353 each contribute to the Mn(2+) site. R355 is an active-site residue.

It belongs to the peptidase M17 family. Mn(2+) serves as cofactor.

The protein localises to the cytoplasm. The enzyme catalyses Release of an N-terminal amino acid, Xaa-|-Yaa-, in which Xaa is preferably Leu, but may be other amino acids including Pro although not Arg or Lys, and Yaa may be Pro. Amino acid amides and methyl esters are also readily hydrolyzed, but rates on arylamides are exceedingly low.. It carries out the reaction Release of an N-terminal amino acid, preferentially leucine, but not glutamic or aspartic acids.. In terms of biological role, presumably involved in the processing and regular turnover of intracellular proteins. Catalyzes the removal of unsubstituted N-terminal amino acids from various peptides. In Vibrio cholerae serotype O1 (strain ATCC 39541 / Classical Ogawa 395 / O395), this protein is Cytosol aminopeptidase.